We begin with the raw amino-acid sequence, 374 residues long: Biotin synthase (374 aa).

Residues 51 to 278 (NTVKVNYLVN…DTEIRIAGGR (228 aa)) enclose the Radical SAM core domain. Residues Cys66, Cys70, and Cys73 each contribute to the [4Fe-4S] cluster site. Positions 110, 143, 203, and 273 each coordinate [2Fe-2S] cluster. The disordered stretch occupies residues 346 to 374 (IAGGTSVAGSAPDPAIRRRGAGTDVPANA).

Belongs to the radical SAM superfamily. Biotin synthase family. Homodimer. [4Fe-4S] cluster serves as cofactor. [2Fe-2S] cluster is required as a cofactor.

The enzyme catalyses (4R,5S)-dethiobiotin + (sulfur carrier)-SH + 2 reduced [2Fe-2S]-[ferredoxin] + 2 S-adenosyl-L-methionine = (sulfur carrier)-H + biotin + 2 5'-deoxyadenosine + 2 L-methionine + 2 oxidized [2Fe-2S]-[ferredoxin]. It participates in cofactor biosynthesis; biotin biosynthesis; biotin from 7,8-diaminononanoate: step 2/2. Functionally, catalyzes the conversion of dethiobiotin (DTB) to biotin by the insertion of a sulfur atom into dethiobiotin via a radical-based mechanism. The chain is Biotin synthase from Nocardioides sp. (strain ATCC BAA-499 / JS614).